Consider the following 134-residue polypeptide: Profilin-2 (134 aa).

C13 and C118 are disulfide-bonded. Positions 84–100 (AVIRGKKGSGGITIKKT) match the Involved in PIP2 interaction motif. At T114 the chain carries Phosphothreonine.

Belongs to the profilin family. As to quaternary structure, occurs in many kinds of cells as a complex with monomeric actin in a 1:1 ratio. Post-translationally, phosphorylated by MAP kinases.

It is found in the cytoplasm. Its subcellular location is the cytoskeleton. Binds to actin and affects the structure of the cytoskeleton. At high concentrations, profilin prevents the polymerization of actin, whereas it enhances it at low concentrations. The sequence is that of Profilin-2 from Olea europaea (Common olive).